The primary structure comprises 228 residues: UPF0758 protein CLD_1541 (228 aa).

One can recognise an MPN domain in the interval 106-228 (KINTPLDVSN…YVSMKEKGTI (123 aa)). Residues histidine 177, histidine 179, and aspartate 190 each coordinate Zn(2+). Positions 177–190 (HNHPSGDPTPSKED) match the JAMM motif motif.

The protein belongs to the UPF0758 family.

This is UPF0758 protein CLD_1541 from Clostridium botulinum (strain Okra / Type B1).